The chain runs to 542 residues: Chaperonin GroEL (542 aa).

Residues Thr29–Pro32, Asp86–Thr90, Gly413, Asp478–Leu480, and Asp494 each bind ATP.

The protein belongs to the chaperonin (HSP60) family. As to quaternary structure, forms a cylinder of 14 subunits composed of two heptameric rings stacked back-to-back. Interacts with the co-chaperonin GroES.

It is found in the cytoplasm. The enzyme catalyses ATP + H2O + a folded polypeptide = ADP + phosphate + an unfolded polypeptide.. Its function is as follows. Together with its co-chaperonin GroES, plays an essential role in assisting protein folding. The GroEL-GroES system forms a nano-cage that allows encapsulation of the non-native substrate proteins and provides a physical environment optimized to promote and accelerate protein folding. The protein is Chaperonin GroEL of Clostridioides difficile (strain 630) (Peptoclostridium difficile).